Here is a 257-residue protein sequence, read N- to C-terminus: 1-(5-phosphoribosyl)-5-[(5-phosphoribosylamino)methylideneamino] imidazole-4-carboxamide isomerase (257 aa).

Asp-8 functions as the Proton acceptor in the catalytic mechanism. Asp-129 functions as the Proton donor in the catalytic mechanism.

This sequence belongs to the HisA/HisF family.

The protein localises to the cytoplasm. It carries out the reaction 1-(5-phospho-beta-D-ribosyl)-5-[(5-phospho-beta-D-ribosylamino)methylideneamino]imidazole-4-carboxamide = 5-[(5-phospho-1-deoxy-D-ribulos-1-ylimino)methylamino]-1-(5-phospho-beta-D-ribosyl)imidazole-4-carboxamide. It participates in amino-acid biosynthesis; L-histidine biosynthesis; L-histidine from 5-phospho-alpha-D-ribose 1-diphosphate: step 4/9. The chain is 1-(5-phosphoribosyl)-5-[(5-phosphoribosylamino)methylideneamino] imidazole-4-carboxamide isomerase from Nostoc punctiforme (strain ATCC 29133 / PCC 73102).